Here is a 296-residue protein sequence, read N- to C-terminus: Ribosomal protein L11 methyltransferase (296 aa).

The S-adenosyl-L-methionine site is built by Thr-145, Gly-166, Asp-188, and Asn-230.

This sequence belongs to the methyltransferase superfamily. PrmA family.

The protein resides in the cytoplasm. It catalyses the reaction L-lysyl-[protein] + 3 S-adenosyl-L-methionine = N(6),N(6),N(6)-trimethyl-L-lysyl-[protein] + 3 S-adenosyl-L-homocysteine + 3 H(+). In terms of biological role, methylates ribosomal protein L11. The chain is Ribosomal protein L11 methyltransferase from Photorhabdus laumondii subsp. laumondii (strain DSM 15139 / CIP 105565 / TT01) (Photorhabdus luminescens subsp. laumondii).